A 257-amino-acid chain; its full sequence is Imidazole glycerol phosphate synthase subunit HisF (257 aa).

Residues Asp-12 and Asp-131 contribute to the active site.

The protein belongs to the HisA/HisF family. In terms of assembly, heterodimer of HisH and HisF.

Its subcellular location is the cytoplasm. The catalysed reaction is 5-[(5-phospho-1-deoxy-D-ribulos-1-ylimino)methylamino]-1-(5-phospho-beta-D-ribosyl)imidazole-4-carboxamide + L-glutamine = D-erythro-1-(imidazol-4-yl)glycerol 3-phosphate + 5-amino-1-(5-phospho-beta-D-ribosyl)imidazole-4-carboxamide + L-glutamate + H(+). It participates in amino-acid biosynthesis; L-histidine biosynthesis; L-histidine from 5-phospho-alpha-D-ribose 1-diphosphate: step 5/9. IGPS catalyzes the conversion of PRFAR and glutamine to IGP, AICAR and glutamate. The HisF subunit catalyzes the cyclization activity that produces IGP and AICAR from PRFAR using the ammonia provided by the HisH subunit. The polypeptide is Imidazole glycerol phosphate synthase subunit HisF (Burkholderia pseudomallei (strain 1106a)).